Reading from the N-terminus, the 252-residue chain is Small ribosomal subunit protein uS2A (252 aa).

N-acetylserine is present on S2. Positions 209–252 are disordered; it reads EVEQQVAEEATTEEAGEEEAKEEVTEEQAEATEWAEENADNVEW. Residues 218 to 252 show a composition bias toward acidic residues; the sequence is ATTEEAGEEEAKEEVTEEQAEATEWAEENADNVEW.

This sequence belongs to the universal ribosomal protein uS2 family. In terms of assembly, component of the small ribosomal subunit. Mature ribosomes consist of a small (40S) and a large (60S) subunit. The 40S subunit contains about 33 different proteins and 1 molecule of RNA (18S). The 60S subunit contains about 49 different proteins and 3 molecules of RNA (25S, 5.8S and 5S). Interacts with RPS21.

The protein localises to the cytoplasm. Functionally, required for the assembly and/or stability of the 40S ribosomal subunit. Required for the processing of the 20S rRNA-precursor to mature 18S rRNA in a late step of the maturation of 40S ribosomal subunits. This chain is Small ribosomal subunit protein uS2A, found in Saccharomyces cerevisiae (strain RM11-1a) (Baker's yeast).